The primary structure comprises 669 residues: Galactocerebrosidase (669 aa).

The N-terminal stretch at 1 to 26 (MTAAAGSAGHAAVPLLLCALLVPGGA) is a signal peptide. Positions 93, 135, and 181 each coordinate substrate. The Proton donor/acceptor role is filled by Glu182. Residue Glu258 is the Nucleophile of the active site. A disulfide bridge connects residues Cys271 and Cys378. The N-linked (GlcNAc...) asparagine glycan is linked to Asn363. Substrate is bound at residue Arg380. 3 N-linked (GlcNAc...) asparagine glycosylation sites follow: Asn387, Asn543, and Asn586.

Belongs to the glycosyl hydrolase 59 family.

The protein resides in the lysosome. The enzyme catalyses a beta-D-galactosyl-(1&lt;-&gt;1')-N-acylsphing-4-enine + H2O = an N-acylsphing-4-enine + D-galactose. It catalyses the reaction beta-D-galactosyl-(1&lt;-&gt;1)-sphing-4-enine + H2O = sphing-4-enine + D-galactose. It carries out the reaction a D-galactosylceramide + H2O = an N-acyl-sphingoid base + D-galactose. Hydrolyzes the galactose ester bonds of glycolipids such as galactosylceramide and galactosylsphingosine. Enzyme with very low activity responsible for the lysosomal catabolism of galactosylceramide, a major lipid in myelin, kidney and epithelial cells of small intestine and colon. The protein is Galactocerebrosidase of Canis lupus familiaris (Dog).